Consider the following 212-residue polypeptide: Peptide methionine sulfoxide reductase MsrA (212 aa).

Residue C52 is part of the active site.

It belongs to the MsrA Met sulfoxide reductase family.

It carries out the reaction L-methionyl-[protein] + [thioredoxin]-disulfide + H2O = L-methionyl-(S)-S-oxide-[protein] + [thioredoxin]-dithiol. The enzyme catalyses [thioredoxin]-disulfide + L-methionine + H2O = L-methionine (S)-S-oxide + [thioredoxin]-dithiol. Has an important function as a repair enzyme for proteins that have been inactivated by oxidation. Catalyzes the reversible oxidation-reduction of methionine sulfoxide in proteins to methionine. This Salmonella agona (strain SL483) protein is Peptide methionine sulfoxide reductase MsrA.